A 60-amino-acid chain; its full sequence is Putative per-hexamer repeat protein 1 (60 aa).

The protein is Putative per-hexamer repeat protein 1 (Phxr1) of Mus musculus (Mouse).